Reading from the N-terminus, the 156-residue chain is Small ribosomal subunit protein uS7 (156 aa).

This sequence belongs to the universal ribosomal protein uS7 family. In terms of assembly, part of the 30S ribosomal subunit. Contacts proteins S9 and S11.

Functionally, one of the primary rRNA binding proteins, it binds directly to 16S rRNA where it nucleates assembly of the head domain of the 30S subunit. Is located at the subunit interface close to the decoding center, probably blocks exit of the E-site tRNA. The sequence is that of Small ribosomal subunit protein uS7 from Wigglesworthia glossinidia brevipalpis.